A 364-amino-acid polypeptide reads, in one-letter code: Putative apoptosis inhibitor ORF42 (364 aa).

Residues 24 to 89 (RLATFRGYEY…CREGVVSAPQ (66 aa)) form a BIR 1 repeat. The disordered stretch occupies residues 83 to 126 (GVVSAPQQQPPPPPSTSIGAVGGDPRPEDMNVPERGWDPPMSKD). Residues 117 to 126 (RGWDPPMSKD) are compositionally biased toward basic and acidic residues. BIR repeat units follow at residues 127-193 (PKST…PLVV) and 236-300 (RIAS…ANMA). The RING-type zinc-finger motif lies at 315–350 (CVICLGAKADTILKPCLHYSLCYGCSTQVQKCPLCR).

May act as an apoptosis inhibitor. The chain is Putative apoptosis inhibitor ORF42 from Magallana gigas (Pacific oyster).